A 103-amino-acid polypeptide reads, in one-letter code: Matrix Gla protein (103 aa).

A signal peptide spans 1 to 19 (MKSLLLLSVLAALAVAALC). At Glu-21 the chain carries 4-carboxyglutamate. A phosphoserine mark is found at Ser-22, Ser-25, and Ser-28. The Gla domain occupies 51–97 (RAKAQERIRELNKPPYELNREACDDYKLCERYAMVYGYNAAYNRYFR). Glu-56, Glu-60, Glu-67, and Glu-71 each carry 4-carboxyglutamate. The cysteines at positions 73 and 79 are disulfide-linked.

This sequence belongs to the osteocalcin/matrix Gla protein family. In terms of processing, requires vitamin K-dependent gamma-carboxylation for its function.

The protein resides in the secreted. Associates with the organic matrix of bone and cartilage. Thought to act as an inhibitor of bone formation. This chain is Matrix Gla protein (MGP), found in Sus scrofa (Pig).